The following is a 419-amino-acid chain: UDP-N-acetylglucosamine 1-carboxyvinyltransferase (419 aa).

22 to 23 (KN) lines the phosphoenolpyruvate pocket. Residue R95 participates in UDP-N-acetyl-alpha-D-glucosamine binding. C119 (proton donor) is an active-site residue. A 2-(S-cysteinyl)pyruvic acid O-phosphothioketal modification is found at C119. UDP-N-acetyl-alpha-D-glucosamine-binding positions include 164–167 (KVSV), D308, and I330.

Belongs to the EPSP synthase family. MurA subfamily.

The protein resides in the cytoplasm. The catalysed reaction is phosphoenolpyruvate + UDP-N-acetyl-alpha-D-glucosamine = UDP-N-acetyl-3-O-(1-carboxyvinyl)-alpha-D-glucosamine + phosphate. Its pathway is cell wall biogenesis; peptidoglycan biosynthesis. Functionally, cell wall formation. Adds enolpyruvyl to UDP-N-acetylglucosamine. This is UDP-N-acetylglucosamine 1-carboxyvinyltransferase from Rickettsia conorii (strain ATCC VR-613 / Malish 7).